Here is a 419-residue protein sequence, read N- to C-terminus: MDKLTIQASPPLAGDVIISGAKNAALPILMAGVLAETDFVVSNVPNLRDVTTSCKLLRCLGAEVTELGDGQIRISTTNLNEFCAPYDLVKTMRASILILGPLLARYGTADVSLPGGCAIGARPVNLHLHGLEMMGAKIEVKEGYIKARVDGRLKGAHIFMDMVSVGATENLLMAAALADGETVIENAAREPEVIDLANCLIAMGAKITGVGSATLRIQGVERLQGCNYRVMPDRIETGSFLVAAAVTRGRIRCLKADPASLESVIAKLEDAGAKITTGEDWIELDMQGKRPKAVNIKTAPYPGFPTDMQAQFCVLNALAQGTATITETIFENRFMHVPELIRMGATMELEGNTCIIQGIESLSGAQVMATDLRASASLVIAGLVADGKTIVDRIYHLDRGYEHIENKFQGLGAQVVRTQ.

22–23 (KN) contributes to the phosphoenolpyruvate binding site. Residue Arg-93 coordinates UDP-N-acetyl-alpha-D-glucosamine. Cys-117 serves as the catalytic Proton donor. At Cys-117 the chain carries 2-(S-cysteinyl)pyruvic acid O-phosphothioketal. 2 residues coordinate UDP-N-acetyl-alpha-D-glucosamine: Asp-307 and Ile-329.

Belongs to the EPSP synthase family. MurA subfamily.

It localises to the cytoplasm. It carries out the reaction phosphoenolpyruvate + UDP-N-acetyl-alpha-D-glucosamine = UDP-N-acetyl-3-O-(1-carboxyvinyl)-alpha-D-glucosamine + phosphate. The protein operates within cell wall biogenesis; peptidoglycan biosynthesis. In terms of biological role, cell wall formation. Adds enolpyruvyl to UDP-N-acetylglucosamine. The polypeptide is UDP-N-acetylglucosamine 1-carboxyvinyltransferase (Shewanella baltica (strain OS195)).